The chain runs to 215 residues: uncharacterized protein (215 aa).

The protein localises to the mitochondrion. This is an uncharacterized protein from Arabidopsis thaliana (Mouse-ear cress).